Reading from the N-terminus, the 1088-residue chain is Neural cell adhesion molecule 1-A (1088 aa).

The first 19 residues, Met1–Ala19, serve as a signal peptide directing secretion. Ig-like C2-type domains follow at residues Leu20–Asn108, Gln113–Gln202, Pro209–Thr294, Pro303–Gln397, and Pro400–Ser484. Residues Leu20–Thr705 are Extracellular-facing. 2 disulfides stabilise this stretch: Cys41–Cys93 and Cys136–Cys186. N-linked (GlcNAc...) asparagine glycosylation occurs at Asn82. Heparin contacts are provided by residues Arg149–Lys153 and Lys158–Arg162. Asn219 is a glycosylation site (N-linked (GlcNAc...) asparagine). Cysteines 232 and 282 form a disulfide. Residues Asn310, Asn341, Asn417, Asn443, and Asn472 are each glycosylated (N-linked (GlcNAc...) asparagine). Cys323 and Cys379 are joined by a disulfide. Cys420 and Cys473 are oxidised to a cystine. Fibronectin type-III domains are found at residues Thr493 to Val592 and Glu594 to Pro690. The chain crosses the membrane as a helical span at residues Gly706–Val723. The Cytoplasmic portion of the chain corresponds to Asp724 to Ala1088. Residues Glu758–Asn784 are compositionally biased toward basic and acidic residues. Disordered regions lie at residues Glu758–Pro802, Phe829–Thr1000, and Val1024–Ala1088. Low complexity-rich tracts occupy residues Ser835–Thr847, Ala854–Thr875, and Pro913–Asn936. Polar residues predominate over residues Gln965–Glu974. Over residues Ala1046–Val1064 the composition is skewed to basic and acidic residues. The span at Asn1076–Ala1088 shows a compositional bias: polar residues.

In terms of processing, polysialylated by ST8SIA2 and ST8SIA4. Polysialylation modulates cell interactions by confering both attractive and repulsive properties that are highly regulated by ST8SIA2 and ST8SIA4. Polysialylation is formed on a-2,3-linked sialic acid of core glycans. Expressed in neuron and in presumptive neural tissue.

The protein localises to the cell membrane. Its function is as follows. This protein is a cell adhesion molecule involved in neuron-neuron adhesion, neurite fasciculation, outgrowth of neurites, etc. The protein is Neural cell adhesion molecule 1-A of Xenopus laevis (African clawed frog).